Here is a 658-residue protein sequence, read N- to C-terminus: Carnitine O-palmitoyltransferase 2, mitochondrial (658 aa).

The N-terminal 25 residues, 1 to 25 (MVPRLLLRAWPRGPAVGPGAPSRPL), are a transit peptide targeting the mitochondrion. Residues 26–178 (SAGSGPGQYL…GLLEPEVFHL (153 aa)) are Mitochondrial matrix-facing. An N6-succinyllysine modification is found at lysine 69. Lysine 79 carries the N6-acetyllysine modification. The residue at position 85 (lysine 85) is an N6-succinyllysine. The note=Mitochondrial inner membrane intramembrane region spans 179 to 208 (NPAKSDTDTFKRLIRFVPSSLSWYGAYLVN). Over 209-658 (AYPLDMSQYF…DALEGKSIKS (450 aa)) the chain is Mitochondrial matrix. Lysine 239 is modified (N6-acetyllysine; alternate). Lysine 239 bears the N6-succinyllysine; alternate mark. Lysine 305 carries the post-translational modification N6-acetyllysine. The Proton acceptor role is filled by histidine 372. Lysine 418 carries the post-translational modification N6-acetyllysine; alternate. Lysine 418 is modified (N6-succinyllysine; alternate). Residues lysine 424 and lysine 439 each carry the N6-succinyllysine modification. Residue 452–464 (GKEFLKKQKLSPD) participates in CoA binding. (R)-carnitine is bound by residues tyrosine 486, serine 488, and threonine 499. Lysine 510 and lysine 544 each carry N6-acetyllysine; alternate. Lysine 510 and lysine 544 each carry N6-succinyllysine; alternate.

It belongs to the carnitine/choline acetyltransferase family.

Its subcellular location is the mitochondrion inner membrane. The enzyme catalyses (R)-carnitine + hexadecanoyl-CoA = O-hexadecanoyl-(R)-carnitine + CoA. It catalyses the reaction octanoyl-CoA + (R)-carnitine = O-octanoyl-(R)-carnitine + CoA. It carries out the reaction decanoyl-CoA + (R)-carnitine = O-decanoyl-(R)-carnitine + CoA. The catalysed reaction is dodecanoyl-CoA + (R)-carnitine = O-dodecanoyl-R-carnitine + CoA. The enzyme catalyses tetradecanoyl-CoA + (R)-carnitine = O-tetradecanoyl-(R)-carnitine + CoA. It catalyses the reaction (R)-carnitine + octadecanoyl-CoA = O-octadecanoyl-(R)-carnitine + CoA. It carries out the reaction eicosanoyl-CoA + (R)-carnitine = O-eicosanoyl-(R)-carnitine + CoA. The catalysed reaction is (9Z)-tetradecenoyl-CoA + (R)-carnitine = O-(9Z)-tetradecenoyl-(R)-carnitine + CoA. The enzyme catalyses (5Z)-tetradecenoyl-CoA + (R)-carnitine = O-(5Z)-tetradecenoyl-(R)-carnitine + CoA. It catalyses the reaction (R)-carnitine + (9Z)-octadecenoyl-CoA = O-(9Z)-octadecenoyl-(R)-carnitine + CoA. It carries out the reaction 4,8-dimethylnonanoyl-CoA + (R)-carnitine = O-4,8-dimethylnonanoyl-(R)-carnitine + CoA. It participates in lipid metabolism; fatty acid beta-oxidation. Its function is as follows. Involved in the intramitochondrial synthesis of acylcarnitines from accumulated acyl-CoA metabolites. Reconverts acylcarnitines back into the respective acyl-CoA esters that can then undergo beta-oxidation, an essential step for the mitochondrial uptake of long-chain fatty acids and their subsequent beta-oxidation in the mitochondrion. Active with medium (C8-C12) and long-chain (C14-C18) acyl-CoA esters. The chain is Carnitine O-palmitoyltransferase 2, mitochondrial (CPT2) from Macaca fascicularis (Crab-eating macaque).